A 146-amino-acid chain; its full sequence is Gene 19.2 protein (146 aa).

This chain is Gene 19.2 protein (19.2), found in Escherichia coli (Bacteriophage T3).